The following is a 194-amino-acid chain: Protein GrpE (194 aa).

Basic and acidic residues predominate over residues 1–12; sequence MNKQKNNRERTP. The disordered stretch occupies residues 1–44; sequence MNKQKNNRERTPQPEQDTERDEQLTNSHENDIDSAPAAEENDKV.

The protein belongs to the GrpE family. In terms of assembly, homodimer.

The protein localises to the cytoplasm. Its function is as follows. Participates actively in the response to hyperosmotic and heat shock by preventing the aggregation of stress-denatured proteins, in association with DnaK and GrpE. It is the nucleotide exchange factor for DnaK and may function as a thermosensor. Unfolded proteins bind initially to DnaJ; upon interaction with the DnaJ-bound protein, DnaK hydrolyzes its bound ATP, resulting in the formation of a stable complex. GrpE releases ADP from DnaK; ATP binding to DnaK triggers the release of the substrate protein, thus completing the reaction cycle. Several rounds of ATP-dependent interactions between DnaJ, DnaK and GrpE are required for fully efficient folding. The sequence is that of Protein GrpE from Porphyromonas gingivalis (strain ATCC BAA-308 / W83).